We begin with the raw amino-acid sequence, 299 residues long: ATP phosphoribosyltransferase (299 aa).

The protein belongs to the ATP phosphoribosyltransferase family. Long subfamily. As to quaternary structure, equilibrium between an active dimeric form, an inactive hexameric form and higher aggregates. Interconversion between the various forms is largely reversible and is influenced by the natural substrates and inhibitors of the enzyme. The cofactor is Mg(2+).

The protein localises to the cytoplasm. The enzyme catalyses 1-(5-phospho-beta-D-ribosyl)-ATP + diphosphate = 5-phospho-alpha-D-ribose 1-diphosphate + ATP. Its pathway is amino-acid biosynthesis; L-histidine biosynthesis; L-histidine from 5-phospho-alpha-D-ribose 1-diphosphate: step 1/9. With respect to regulation, feedback inhibited by histidine. In terms of biological role, catalyzes the condensation of ATP and 5-phosphoribose 1-diphosphate to form N'-(5'-phosphoribosyl)-ATP (PR-ATP). Has a crucial role in the pathway because the rate of histidine biosynthesis seems to be controlled primarily by regulation of HisG enzymatic activity. In Escherichia fergusonii (strain ATCC 35469 / DSM 13698 / CCUG 18766 / IAM 14443 / JCM 21226 / LMG 7866 / NBRC 102419 / NCTC 12128 / CDC 0568-73), this protein is ATP phosphoribosyltransferase.